We begin with the raw amino-acid sequence, 643 residues long: Cytoplasmic dynein 1 intermediate chain 1 (643 aa).

2 stretches are compositionally biased toward basic and acidic residues: residues 1–13 (MSDK…ELER) and 20–60 (QIRE…RETE). 2 disordered regions span residues 1 to 65 (MSDK…LLQS) and 96 to 123 (MSPS…RTLQ). At S2 the chain carries N-acetylserine. Residues 2-123 (SDKSDLKAEL…DLGPLTRTLQ (122 aa)) are interaction with DCTN1. Phosphoserine is present on residues S50 and S100. Over residues 96–107 (MSPSSKSVSTPS) the composition is skewed to low complexity. Position 105 is a phosphothreonine (T105). 2 positions are modified to phosphoserine: S107 and S111. The segment at 145 to 161 (KLGVSKVTQVDFLPREV) is interaction with DYNLT1. Residues 167-219 (ETQTPLATHQSEEDEEDEEMVEPKVGHDSELENQDKKQETKEAPPRELTEEEK) form a disordered region. At T174 the chain carries Phosphothreonine. Phosphoserine occurs at positions 177 and 195. Residues 187-219 (VEPKVGHDSELENQDKKQETKEAPPRELTEEEK) show a composition bias toward basic and acidic residues. WD repeat units follow at residues 283-332 (SKHR…TTPE), 336-376 (HCQS…RTPV), 385-426 (AHTH…TPQE), 435-475 (SKPV…AGIG), 480-525 (GHQG…PLYS), 528-568 (DNAD…EVPT), and 574-613 (EGAY…VPHN). Position 633 is a phosphoserine (S633).

This sequence belongs to the dynein intermediate chain family. In terms of assembly, homodimer. The cytoplasmic dynein 1 complex consists of two catalytic heavy chains (HCs) and a number of non-catalytic subunits presented by intermediate chains (ICs), light intermediate chains (LICs) and light chains (LCs); the composition seems to vary in respect to the IC, LIC and LC composition. The heavy chain homodimer serves as a scaffold for the probable homodimeric assembly of the respective non-catalytic subunits. The ICs and LICs bind directly to the HC dimer and the LCs assemble on the IC dimer. Isoform 1, isoform 2 and isoform 3 interact with DYNC1H1. Isoform 1, isoform 2 and isoform 3 interact with DYNLT3. Isoform 1, isoform 2 and isoform 3 interact with DYNLT1. Interacts with DCTN1. Interacts with MCRS1; the interaction is required for the proper distribution of centriolar satellites. High levels seen in the brain and testis, while a lower level expression is seen in the liver, spleen, kidney, lung, skeletal muscle and heart.

The protein resides in the cytoplasm. Its subcellular location is the chromosome. It localises to the centromere. The protein localises to the kinetochore. It is found in the cytoskeleton. The protein resides in the spindle pole. Acts as one of several non-catalytic accessory components of the cytoplasmic dynein 1 complex that are thought to be involved in linking dynein to cargos and to adapter proteins that regulate dynein function. Cytoplasmic dynein 1 acts as a motor for the intracellular retrograde motility of vesicles and organelles along microtubules. The intermediate chains mediate the binding of dynein to dynactin via its 150 kDa component (p150-glued) DCTN1. May play a role in mediating the interaction of cytoplasmic dynein with membranous organelles and kinetochores. The protein is Cytoplasmic dynein 1 intermediate chain 1 (Dync1i1) of Rattus norvegicus (Rat).